Reading from the N-terminus, the 365-residue chain is Peptide chain release factor 1 (365 aa).

An N5-methylglutamine modification is found at Q242.

The protein belongs to the prokaryotic/mitochondrial release factor family. Post-translationally, methylated by PrmC. Methylation increases the termination efficiency of RF1.

It localises to the cytoplasm. Functionally, peptide chain release factor 1 directs the termination of translation in response to the peptide chain termination codons UAG and UAA. The protein is Peptide chain release factor 1 of Fusobacterium nucleatum subsp. nucleatum (strain ATCC 25586 / DSM 15643 / BCRC 10681 / CIP 101130 / JCM 8532 / KCTC 2640 / LMG 13131 / VPI 4355).